Here is a 344-residue protein sequence, read N- to C-terminus: AP2/ERF and B3 domain-containing transcription factor RAV1 (344 aa).

Low complexity predominate over residues Met1–Ser15. The interval Met1–Ile22 is disordered. Residues Lys61 to Lys116 constitute a DNA-binding region (AP2/ERF). A disordered region spans residues Glu148–Ser169. The TF-B3 DNA-binding region spans Phe188–Ser292.

It belongs to the AP2/ERF transcription factor family. RAV subfamily. In terms of assembly, monomer. As to expression, expressed in all tissues examined: Roots, rosette leaves, cauline leaves, inflorescence stems, flowers and siliques. Highest expression in roots and rosette leaves. Very low expression in flowers.

The protein resides in the nucleus. Functionally, binds specifically to bipartite recognition sequences composed of two unrelated motifs, 5'-CAACA-3' and 5'-CACCTG-3'. May function as negative regulator of plant growth and development. In Arabidopsis thaliana (Mouse-ear cress), this protein is AP2/ERF and B3 domain-containing transcription factor RAV1 (RAV1).